Reading from the N-terminus, the 286-residue chain is Cytotoxin (286 aa).

Positions threonine 267 to glutamate 286 are excised as a propeptide.

The protein belongs to the aerolysin family.

The protein localises to the secreted. Cytotoxin is thought to form hydrophilic pores in cell membranes. In Pseudomonas aeruginosa, this protein is Cytotoxin (ctx).